Reading from the N-terminus, the 192-residue chain is Putative manganese efflux pump MntP (192 aa).

Transmembrane regions (helical) follow at residues 3–23 (LIFT…AVSF), 38–58 (FILA…GWLL), 61–81 (GFAD…LFII), 101–121 (VFNF…ALAV), 130–150 (IVPL…SVGG), and 167–187 (ILGG…HLVW).

The protein belongs to the MntP (TC 9.B.29) family.

The protein localises to the cell membrane. Probably functions as a manganese efflux pump. The polypeptide is Putative manganese efflux pump MntP (Methanospirillum hungatei JF-1 (strain ATCC 27890 / DSM 864 / NBRC 100397 / JF-1)).